We begin with the raw amino-acid sequence, 125 residues long: Major intrinsically disordered NOTCH2-binding receptor 1-like (125 aa).

The N-linked (GlcNAc...) asparagine glycan is linked to Asn-37. The helical transmembrane segment at 100–120 threads the bilayer; that stretch reads FAFITLFVCAVVIIITVPIVV.

It belongs to the MINAR family. As to quaternary structure, interacts with NOTCH2. In terms of tissue distribution, highly expressed in the auditory hair cells.

It localises to the lysosome membrane. The protein localises to the endoplasmic reticulum membrane. In terms of biological role, binds cholesterol and may regulate the distribution and homeostasis of cholesterol in hair cells. May play a role in angiogenesis. This chain is Major intrinsically disordered NOTCH2-binding receptor 1-like, found in Danio rerio (Zebrafish).